A 179-amino-acid chain; its full sequence is Large ribosomal subunit protein uL5 (179 aa).

It belongs to the universal ribosomal protein uL5 family. Part of the 50S ribosomal subunit; part of the 5S rRNA/L5/L18/L25 subcomplex. Contacts the 5S rRNA and the P site tRNA. Forms a bridge to the 30S subunit in the 70S ribosome.

Functionally, this is one of the proteins that bind and probably mediate the attachment of the 5S RNA into the large ribosomal subunit, where it forms part of the central protuberance. In the 70S ribosome it contacts protein S13 of the 30S subunit (bridge B1b), connecting the 2 subunits; this bridge is implicated in subunit movement. Contacts the P site tRNA; the 5S rRNA and some of its associated proteins might help stabilize positioning of ribosome-bound tRNAs. The sequence is that of Large ribosomal subunit protein uL5 from Exiguobacterium sibiricum (strain DSM 17290 / CCUG 55495 / CIP 109462 / JCM 13490 / 255-15).